The chain runs to 510 residues: GMP synthase [glutamine-hydrolyzing] (510 aa).

The Glutamine amidotransferase type-1 domain maps to 5 to 195 (LVLVVDFGGQ…LFNVCNLKGD (191 aa)). The Nucleophile role is filled by Cys82. Catalysis depends on residues His169 and Glu171. Residues 196–385 (WSMSSFAEQQ…LGIPHKLVWR (190 aa)) form the GMPS ATP-PPase domain. Position 223-229 (223-229 (SGGVDSS)) interacts with ATP.

Homodimer.

The enzyme catalyses XMP + L-glutamine + ATP + H2O = GMP + L-glutamate + AMP + diphosphate + 2 H(+). It functions in the pathway purine metabolism; GMP biosynthesis; GMP from XMP (L-Gln route): step 1/1. In terms of biological role, catalyzes the synthesis of GMP from XMP. The protein is GMP synthase [glutamine-hydrolyzing] of Clostridium botulinum (strain Loch Maree / Type A3).